The primary structure comprises 201 residues: Protein VirD3 (201 aa).

Disordered stretches follow at residues 28–51 (ASSS…SSSR) and 139–171 (RVNS…VTPA). Basic and acidic residues predominate over residues 141–161 (NSDRRLPTDAENHPETRDPRK).

This Rhizobium radiobacter (Agrobacterium tumefaciens) protein is Protein VirD3 (virD3).